Reading from the N-terminus, the 266-residue chain is Zinc transport system ATP-binding protein TroB (266 aa).

Residues 11 to 243 (VQVDDLTLAY…YVQRAYGGRI (233 aa)) enclose the ABC transporter domain. 43–50 (GPNGAGKS) is a binding site for ATP.

It belongs to the ABC transporter superfamily.

Functionally, part of an ATP-driven transport system TroABCD for zinc. The protein is Zinc transport system ATP-binding protein TroB (troB) of Treponema pallidum (strain Nichols).